The chain runs to 147 residues: Lysozyme C (147 aa).

The first 18 residues, M1–G18, serve as a signal peptide directing secretion. Positions K19–L147 constitute a C-type lysozyme domain. Intrachain disulfides connect C24/C145, C48/C133, C82/C98, and C94/C112. Catalysis depends on residues E53 and D70. D119 contributes to the substrate binding site.

Belongs to the glycosyl hydrolase 22 family. As to quaternary structure, monomer. In the egg white and polymorphonuclear leukocytes.

It is found in the secreted. The enzyme catalyses Hydrolysis of (1-&gt;4)-beta-linkages between N-acetylmuramic acid and N-acetyl-D-glucosamine residues in a peptidoglycan and between N-acetyl-D-glucosamine residues in chitodextrins.. Functionally, lysozymes have primarily a bacteriolytic function; those in tissues and body fluids are associated with the monocyte-macrophage system and enhance the activity of immunoagents. Has bacteriolytic activity against M.luteus. This Gallus gallus (Chicken) protein is Lysozyme C (LYZ).